The following is a 92-amino-acid chain: UPF0223 protein SERP0684 (92 aa).

This sequence belongs to the UPF0223 family.

In Staphylococcus epidermidis (strain ATCC 35984 / DSM 28319 / BCRC 17069 / CCUG 31568 / BM 3577 / RP62A), this protein is UPF0223 protein SERP0684.